Reading from the N-terminus, the 289-residue chain is tRNA-cytidine(32) 2-sulfurtransferase (289 aa).

A PP-loop motif motif is present at residues Ser49–Ser54. 3 residues coordinate [4Fe-4S] cluster: Cys124, Cys127, and Cys215.

This sequence belongs to the TtcA family. In terms of assembly, homodimer. Mg(2+) is required as a cofactor. The cofactor is [4Fe-4S] cluster.

It is found in the cytoplasm. The catalysed reaction is cytidine(32) in tRNA + S-sulfanyl-L-cysteinyl-[cysteine desulfurase] + AH2 + ATP = 2-thiocytidine(32) in tRNA + L-cysteinyl-[cysteine desulfurase] + A + AMP + diphosphate + H(+). It functions in the pathway tRNA modification. In terms of biological role, catalyzes the ATP-dependent 2-thiolation of cytidine in position 32 of tRNA, to form 2-thiocytidine (s(2)C32). The sulfur atoms are provided by the cysteine/cysteine desulfurase (IscS) system. This is tRNA-cytidine(32) 2-sulfurtransferase from Methylococcus capsulatus (strain ATCC 33009 / NCIMB 11132 / Bath).